The following is a 395-amino-acid chain: S-adenosylmethionine synthase (395 aa).

H14 is a binding site for ATP. D16 is a binding site for Mg(2+). E42 lines the K(+) pocket. L-methionine contacts are provided by E55 and Q98. The interval Q98 to K108 is flexible loop. ATP contacts are provided by residues D174–K176, R240–F241, D249, R255–K256, A272, and K276. Position 249 (D249) interacts with L-methionine. K280 is an L-methionine binding site.

Belongs to the AdoMet synthase family. As to quaternary structure, homotetramer; dimer of dimers. Requires Mg(2+) as cofactor. The cofactor is K(+).

Its subcellular location is the cytoplasm. It carries out the reaction L-methionine + ATP + H2O = S-adenosyl-L-methionine + phosphate + diphosphate. The protein operates within amino-acid biosynthesis; S-adenosyl-L-methionine biosynthesis; S-adenosyl-L-methionine from L-methionine: step 1/1. Its function is as follows. Catalyzes the formation of S-adenosylmethionine (AdoMet) from methionine and ATP. The overall synthetic reaction is composed of two sequential steps, AdoMet formation and the subsequent tripolyphosphate hydrolysis which occurs prior to release of AdoMet from the enzyme. This chain is S-adenosylmethionine synthase, found in Caldanaerobacter subterraneus subsp. tengcongensis (strain DSM 15242 / JCM 11007 / NBRC 100824 / MB4) (Thermoanaerobacter tengcongensis).